Consider the following 352-residue polypeptide: Heat-inducible transcription repressor HrcA (352 aa).

The protein belongs to the HrcA family.

Functionally, negative regulator of class I heat shock genes (grpE-dnaK-dnaJ and groELS operons). Prevents heat-shock induction of these operons. In Ralstonia nicotianae (strain ATCC BAA-1114 / GMI1000) (Ralstonia solanacearum), this protein is Heat-inducible transcription repressor HrcA.